Consider the following 269-residue polypeptide: 4-hydroxy-tetrahydrodipicolinate reductase (269 aa).

Residues 12-17 (GGSGRM), 102-104 (GTT), and 126-129 (SPNM) each bind NAD(+). His-159 (proton donor/acceptor) is an active-site residue. His-160 is a binding site for (S)-2,3,4,5-tetrahydrodipicolinate. Catalysis depends on Lys-163, which acts as the Proton donor. Residue 169-170 (GT) coordinates (S)-2,3,4,5-tetrahydrodipicolinate.

Belongs to the DapB family.

It is found in the cytoplasm. The enzyme catalyses (S)-2,3,4,5-tetrahydrodipicolinate + NAD(+) + H2O = (2S,4S)-4-hydroxy-2,3,4,5-tetrahydrodipicolinate + NADH + H(+). It carries out the reaction (S)-2,3,4,5-tetrahydrodipicolinate + NADP(+) + H2O = (2S,4S)-4-hydroxy-2,3,4,5-tetrahydrodipicolinate + NADPH + H(+). It functions in the pathway amino-acid biosynthesis; L-lysine biosynthesis via DAP pathway; (S)-tetrahydrodipicolinate from L-aspartate: step 4/4. Its function is as follows. Catalyzes the conversion of 4-hydroxy-tetrahydrodipicolinate (HTPA) to tetrahydrodipicolinate. In Leptospira borgpetersenii serovar Hardjo-bovis (strain JB197), this protein is 4-hydroxy-tetrahydrodipicolinate reductase.